The primary structure comprises 37 residues: Calcitonin gene-related peptide (37 aa).

A disulfide bridge links cysteine 2 with cysteine 7. Phenylalanine 37 carries the phenylalanine amide modification.

The protein belongs to the calcitonin family.

Its function is as follows. CGRP induces vasodilation. It dilates a variety of vessels including the coronary, cerebral and systemic vasculature. Its abundance in the CNS also points toward a neurotransmitter or neuromodulator role. This is Calcitonin gene-related peptide from Pelophylax ridibundus (Marsh frog).